Here is a 52-residue protein sequence, read N- to C-terminus: UPF0391 membrane protein XCV0245 (52 aa).

Transmembrane regions (helical) follow at residues 5-25 (AIIF…GIAG) and 27-47 (ATNI…ISMF).

It belongs to the UPF0391 family.

Its subcellular location is the cell membrane. The polypeptide is UPF0391 membrane protein XCV0245 (Xanthomonas euvesicatoria pv. vesicatoria (strain 85-10) (Xanthomonas campestris pv. vesicatoria)).